A 150-amino-acid polypeptide reads, in one-letter code: Arginine repressor (150 aa).

It belongs to the ArgR family.

Its subcellular location is the cytoplasm. It functions in the pathway amino-acid biosynthesis; L-arginine biosynthesis [regulation]. In terms of biological role, regulates arginine biosynthesis genes. The sequence is that of Arginine repressor from Staphylococcus epidermidis (strain ATCC 35984 / DSM 28319 / BCRC 17069 / CCUG 31568 / BM 3577 / RP62A).